Consider the following 493-residue polypeptide: Cobyric acid synthase (493 aa).

The 195-residue stretch at 246-440 (PIDIAVIKMP…IHGVFDGVVF (195 aa)) folds into the GATase cobBQ-type domain. The active-site Nucleophile is the Cys326. His432 is an active-site residue.

Belongs to the CobB/CobQ family. CobQ subfamily.

Its pathway is cofactor biosynthesis; adenosylcobalamin biosynthesis. Catalyzes amidations at positions B, D, E, and G on adenosylcobyrinic A,C-diamide. NH(2) groups are provided by glutamine, and one molecule of ATP is hydrogenolyzed for each amidation. In Clostridium botulinum (strain ATCC 19397 / Type A), this protein is Cobyric acid synthase.